We begin with the raw amino-acid sequence, 425 residues long: 3-phosphoshikimate 1-carboxyvinyltransferase (425 aa).

Lys23, Ser24, and Arg28 together coordinate 3-phosphoshikimate. Lys23 is a phosphoenolpyruvate binding site. 2 residues coordinate phosphoenolpyruvate: Gly96 and Arg124. Thr170, Ser171, Gln172, Ser198, Asp314, and Lys341 together coordinate 3-phosphoshikimate. Residue Gln172 participates in phosphoenolpyruvate binding. The active-site Proton acceptor is Asp314. 3 residues coordinate phosphoenolpyruvate: Arg345, Arg386, and Lys411.

Belongs to the EPSP synthase family. Monomer.

It localises to the cytoplasm. The catalysed reaction is 3-phosphoshikimate + phosphoenolpyruvate = 5-O-(1-carboxyvinyl)-3-phosphoshikimate + phosphate. Its pathway is metabolic intermediate biosynthesis; chorismate biosynthesis; chorismate from D-erythrose 4-phosphate and phosphoenolpyruvate: step 6/7. In terms of biological role, catalyzes the transfer of the enolpyruvyl moiety of phosphoenolpyruvate (PEP) to the 5-hydroxyl of shikimate-3-phosphate (S3P) to produce enolpyruvyl shikimate-3-phosphate and inorganic phosphate. The protein is 3-phosphoshikimate 1-carboxyvinyltransferase of Nostoc sp. (strain PCC 7120 / SAG 25.82 / UTEX 2576).